The primary structure comprises 271 residues: Undecaprenyl-diphosphatase (271 aa).

8 helical membrane-spanning segments follow: residues 5 to 25 (YALF…FLPV), 45 to 65 (AATF…AVFW), 86 to 106 (TLSL…GLAI), 114 to 134 (LFGP…LIIA), 149 to 169 (ISYK…WPGF), 189 to 209 (AAEF…GLDL), 226 to 246 (VGFI…LALI), and 251 to 271 (FIPF…VFVA).

It belongs to the UppP family.

Its subcellular location is the cell inner membrane. It carries out the reaction di-trans,octa-cis-undecaprenyl diphosphate + H2O = di-trans,octa-cis-undecaprenyl phosphate + phosphate + H(+). Catalyzes the dephosphorylation of undecaprenyl diphosphate (UPP). Confers resistance to bacitracin. The sequence is that of Undecaprenyl-diphosphatase from Aeromonas hydrophila subsp. hydrophila (strain ATCC 7966 / DSM 30187 / BCRC 13018 / CCUG 14551 / JCM 1027 / KCTC 2358 / NCIMB 9240 / NCTC 8049).